The chain runs to 169 residues: ATP synthase subunit b (169 aa).

Residues 26–46 form a helical membrane-spanning segment; it reads FFFVLLIFLIVLGVIAKWVVP.

Belongs to the ATPase B chain family. As to quaternary structure, F-type ATPases have 2 components, F(1) - the catalytic core - and F(0) - the membrane proton channel. F(1) has five subunits: alpha(3), beta(3), gamma(1), delta(1), epsilon(1). F(0) has three main subunits: a(1), b(2) and c(10-14). The alpha and beta chains form an alternating ring which encloses part of the gamma chain. F(1) is attached to F(0) by a central stalk formed by the gamma and epsilon chains, while a peripheral stalk is formed by the delta and b chains.

It is found in the cell membrane. In terms of biological role, f(1)F(0) ATP synthase produces ATP from ADP in the presence of a proton or sodium gradient. F-type ATPases consist of two structural domains, F(1) containing the extramembraneous catalytic core and F(0) containing the membrane proton channel, linked together by a central stalk and a peripheral stalk. During catalysis, ATP synthesis in the catalytic domain of F(1) is coupled via a rotary mechanism of the central stalk subunits to proton translocation. Its function is as follows. Component of the F(0) channel, it forms part of the peripheral stalk, linking F(1) to F(0). The chain is ATP synthase subunit b from Mycobacterium sp. (strain JLS).